A 295-amino-acid chain; its full sequence is Tyrosine recombinase XerC (295 aa).

One can recognise a Core-binding (CB) domain in the interval 1-85; sequence MHILLQKYYN…ALRQFLNYLV (85 aa). The 180-residue stretch at 106-285 folds into the Tyr recombinase domain; sequence YLPKNMDMEQ…DFQHLAQVYD (180 aa). Catalysis depends on residues R145, K169, H237, R240, and H263. The active-site O-(3'-phospho-DNA)-tyrosine intermediate is Y272.

Belongs to the 'phage' integrase family. XerC subfamily. In terms of assembly, forms a cyclic heterotetrameric complex composed of two molecules of XerC and two molecules of XerD.

It is found in the cytoplasm. Functionally, site-specific tyrosine recombinase, which acts by catalyzing the cutting and rejoining of the recombining DNA molecules. The XerC-XerD complex is essential to convert dimers of the bacterial chromosome into monomers to permit their segregation at cell division. It also contributes to the segregational stability of plasmids. The protein is Tyrosine recombinase XerC of Histophilus somni (strain 2336) (Haemophilus somnus).